The primary structure comprises 247 residues: UPF0246 protein LCABL_22600 (247 aa).

The protein belongs to the UPF0246 family.

The protein is UPF0246 protein LCABL_22600 of Lacticaseibacillus casei (strain BL23) (Lactobacillus casei).